The chain runs to 88 residues: Small ribosomal subunit protein bS20 (88 aa).

It belongs to the bacterial ribosomal protein bS20 family.

Functionally, binds directly to 16S ribosomal RNA. The polypeptide is Small ribosomal subunit protein bS20 (Bradyrhizobium sp. (strain BTAi1 / ATCC BAA-1182)).